Here is a 376-residue protein sequence, read N- to C-terminus: GTPase Obg (376 aa).

The Obg domain occupies 1–158; it reads MFIDSVNLTL…RDVRLELKLI (158 aa). One can recognise an OBG-type G domain in the interval 159–359; that stretch reads ADVGLVGFPN…LKFSLLELLK (201 aa). GTP is bound by residues 165–172, 190–194, 212–215, 280–283, and 340–342; these read GFPNVGKS, FTTLT, DIPG, TRMD, and SSA. Mg(2+)-binding residues include S172 and T192.

The protein belongs to the TRAFAC class OBG-HflX-like GTPase superfamily. OBG GTPase family. As to quaternary structure, monomer. Mg(2+) serves as cofactor.

It is found in the cytoplasm. Its function is as follows. An essential GTPase which binds GTP, GDP and possibly (p)ppGpp with moderate affinity, with high nucleotide exchange rates and a fairly low GTP hydrolysis rate. Plays a role in control of the cell cycle, stress response, ribosome biogenesis and in those bacteria that undergo differentiation, in morphogenesis control. This Campylobacter curvus (strain 525.92) protein is GTPase Obg.